The primary structure comprises 338 residues: Rho GTPase-activating protein gacA (338 aa).

Residues 149–327 (NTLEHVEDEG…NVLSHKVAVH (179 aa)) form the Rho-GAP domain.

It is found in the cytoplasm. Its function is as follows. Rho GTPase-activating protein involved in the signal transduction pathway. The polypeptide is Rho GTPase-activating protein gacA (gacA) (Dictyostelium discoideum (Social amoeba)).